We begin with the raw amino-acid sequence, 334 residues long: Tryptophan--tRNA ligase (334 aa).

ATP-binding positions include 11 to 13 (QPS) and 19 to 20 (GN). Positions 12–20 (PSGELTIGN) match the 'HIGH' region motif. Residue Asp135 participates in L-tryptophan binding. Residues 147–149 (GED), Val186, and 195–199 (KMSKS) contribute to the ATP site. The 'KMSKS' region signature appears at 195-199 (KMSKS).

This sequence belongs to the class-I aminoacyl-tRNA synthetase family. As to quaternary structure, homodimer.

The protein resides in the cytoplasm. It carries out the reaction tRNA(Trp) + L-tryptophan + ATP = L-tryptophyl-tRNA(Trp) + AMP + diphosphate + H(+). Its function is as follows. Catalyzes the attachment of tryptophan to tRNA(Trp). The protein is Tryptophan--tRNA ligase of Shigella flexneri.